The following is a 437-amino-acid chain: GTPase Der (437 aa).

EngA-type G domains lie at 3–167 (NLVA…KKES) and 176–352 (PRFA…ENRM). Residues 9 to 16 (GRPNVGKS), 56 to 60 (DTGGW), 119 to 122 (NKTD), 182 to 189 (GRPNAGKS), 229 to 233 (DTAGI), and 294 to 297 (NKWD) contribute to the GTP site. A KH-like domain is found at 353–437 (IKIPTARLNE…TPINIYIRQK (85 aa)).

The protein belongs to the TRAFAC class TrmE-Era-EngA-EngB-Septin-like GTPase superfamily. EngA (Der) GTPase family. As to quaternary structure, associates with the 50S ribosomal subunit.

Functionally, GTPase that plays an essential role in the late steps of ribosome biogenesis. The polypeptide is GTPase Der (Bacteroides fragilis (strain ATCC 25285 / DSM 2151 / CCUG 4856 / JCM 11019 / LMG 10263 / NCTC 9343 / Onslow / VPI 2553 / EN-2)).